Consider the following 384-residue polypeptide: 23S rRNA (uracil(747)-C(5))-methyltransferase RlmC (384 aa).

The [4Fe-4S] cluster site is built by cysteine 7, cysteine 15, cysteine 18, and cysteine 94. S-adenosyl-L-methionine contacts are provided by glutamine 219, phenylalanine 248, glutamate 269, and asparagine 316. The active-site Nucleophile is cysteine 343.

It belongs to the class I-like SAM-binding methyltransferase superfamily. RNA M5U methyltransferase family. RlmC subfamily.

It catalyses the reaction uridine(747) in 23S rRNA + S-adenosyl-L-methionine = 5-methyluridine(747) in 23S rRNA + S-adenosyl-L-homocysteine + H(+). Its function is as follows. Catalyzes the formation of 5-methyl-uridine at position 747 (m5U747) in 23S rRNA. In Shewanella sp. (strain ANA-3), this protein is 23S rRNA (uracil(747)-C(5))-methyltransferase RlmC.